Reading from the N-terminus, the 286-residue chain is Beta-lactamase TEM-12 (286 aa).

Residues 1-23 (MSIQHFRVALIPFFAAFCLPVFA) form the signal peptide. The active-site Acyl-ester intermediate is S68. C75 and C121 are joined by a disulfide. The active-site Proton acceptor is the E166. Substrate is bound at residue 232-234 (KSG).

It belongs to the class-A beta-lactamase family.

It carries out the reaction a beta-lactam + H2O = a substituted beta-amino acid. Its function is as follows. TEM-type are the most prevalent beta-lactamases in enterobacteria; they hydrolyze the beta-lactam bond in susceptible beta-lactam antibiotics, thus conferring resistance to penicillins and cephalosporins such as ceftazidime. This is Beta-lactamase TEM-12 (blaT-12b) from Klebsiella oxytoca.